The sequence spans 594 residues: Protein wntless (594 aa).

Residues 1-13 (MSGTILENLSGRK) are Cytoplasmic-facing. Residues 14–34 (LSILVATLLLCQVLCFLLGGL) form a helical membrane-spanning segment. Residues 35–239 (YAPLPAGHVT…AIHQNGGFTQ (205 aa)) are Lumenal-facing. Asn58 carries an N-linked (GlcNAc...) asparagine glycan. A helical membrane pass occupies residues 240 to 260 (IWLLLKTMLFPFVVGIMIWFW). At 261 to 270 (RRVHLLQRSP) the chain is on the cytoplasmic side. Residues 271–291 (ALLEYMLIYLGAALTFLNLPL) traverse the membrane as a helical segment. The Lumenal portion of the chain corresponds to 292-311 (EYLSLVYEMPYMLLLSDIRQ). A helical membrane pass occupies residues 312 to 332 (GIFYAMLLTFWLVFAGEHMLI). At 333–344 (QDAPNKSTIRSR) the chain is on the cytoplasmic side. Residues 345–365 (YWKHLSAVVVGCISLFVFDIC) traverse the membrane as a helical segment. The Lumenal segment spans residues 366-390 (ERGVQLRNPFYSIWTTPLGAKVAMT). Residues 391-411 (FIVLAGVSAAIYFLFLCYMIW) form a helical membrane-spanning segment. Residues 412-473 (KVFRNIGDKR…ANESKGLIYR (62 aa)) are Cytoplasmic-facing. A helical membrane pass occupies residues 474–494 (FKFLMLATLVCAALTVAGFIM). At 495-514 (GQMAEGQWDWNDNVAIQPTS) the chain is on the lumenal side. Residues 515–535 (AFLTGVYGMWNIYIFALLILY) traverse the membrane as a helical segment. The Cytoplasmic segment spans residues 536-594 (APSHKQWPTMHHSDETTQSNENIVASAASEEIEFSHLPSDSNPSEISSLTSFTRKVAFD). The segment at 571-594 (HLPSDSNPSEISSLTSFTRKVAFD) is disordered. A compositionally biased stretch (polar residues) spans 573-588 (PSDSNPSEISSLTSFT).

Belongs to the wntless family. In terms of assembly, interacts with wg; in the Golgi. Interacts with Vps35, a component of the retromer complex; wls stability is regulated by Vps35. As to expression, ubiquitously expressed in the wing imaginal disk, increased expression is observed in a stripe at the dorso-ventral boundary and other regions of the wing disk that express wg. Also expresses in the leg imaginal disk. During larval development, expression is seen in both motorneurons and muscle.

It is found in the presynaptic cell membrane. Its subcellular location is the postsynaptic cell membrane. The protein localises to the cell membrane. The protein resides in the endosome membrane. It localises to the endoplasmic reticulum membrane. It is found in the golgi apparatus membrane. A segment polarity gene required for wingless (wg)-dependent patterning processes, acting in both wg-sending cells and wg-target cells. In non-neuronal cells wls directs wg secretion. The wls traffic loop encompasses the Golgi, the cell surface, an endocytic compartment and a retrograde route leading back to the Golgi, and involves clathrin-mediated endocytosis and the retromer complex (a conserved protein complex consisting of Vps35 and Vps26). In neuronal cells (the larval motorneuron NMJ), the wg signal moves across the synapse via the release of wls-containing exosome-like vesicles. Postsynaptic wls is required for the trafficking of fz2 through the fz2-interacting protein Grip. In Drosophila melanogaster (Fruit fly), this protein is Protein wntless.